The following is a 390-amino-acid chain: Chorismate synthase 2 (390 aa).

NADP(+) is bound by residues Arg-39 and Arg-45. Residues 132–134 (RSS), 253–254 (NA), Gly-298, 313–317 (KPIPT), and Arg-339 contribute to the FMN site.

It belongs to the chorismate synthase family. Homotetramer. FMNH2 serves as cofactor.

The enzyme catalyses 5-O-(1-carboxyvinyl)-3-phosphoshikimate = chorismate + phosphate. It participates in metabolic intermediate biosynthesis; chorismate biosynthesis; chorismate from D-erythrose 4-phosphate and phosphoenolpyruvate: step 7/7. In terms of biological role, catalyzes the anti-1,4-elimination of the C-3 phosphate and the C-6 proR hydrogen from 5-enolpyruvylshikimate-3-phosphate (EPSP) to yield chorismate, which is the branch point compound that serves as the starting substrate for the three terminal pathways of aromatic amino acid biosynthesis. This reaction introduces a second double bond into the aromatic ring system. The protein is Chorismate synthase 2 of Bacillus cereus (strain ATCC 14579 / DSM 31 / CCUG 7414 / JCM 2152 / NBRC 15305 / NCIMB 9373 / NCTC 2599 / NRRL B-3711).